The following is a 166-amino-acid chain: Large ribosomal subunit protein uL10 (166 aa).

The protein belongs to the universal ribosomal protein uL10 family. Part of the ribosomal stalk of the 50S ribosomal subunit. The N-terminus interacts with L11 and the large rRNA to form the base of the stalk. The C-terminus forms an elongated spine to which L12 dimers bind in a sequential fashion forming a multimeric L10(L12)X complex.

In terms of biological role, forms part of the ribosomal stalk, playing a central role in the interaction of the ribosome with GTP-bound translation factors. This Shewanella baltica (strain OS223) protein is Large ribosomal subunit protein uL10.